The sequence spans 238 residues: Ribonuclease PH (238 aa).

Residues Arg-86 and 124–126 (GTR) contribute to the phosphate site.

The protein belongs to the RNase PH family. Homohexameric ring arranged as a trimer of dimers.

It catalyses the reaction tRNA(n+1) + phosphate = tRNA(n) + a ribonucleoside 5'-diphosphate. Phosphorolytic 3'-5' exoribonuclease that plays an important role in tRNA 3'-end maturation. Removes nucleotide residues following the 3'-CCA terminus of tRNAs; can also add nucleotides to the ends of RNA molecules by using nucleoside diphosphates as substrates, but this may not be physiologically important. Probably plays a role in initiation of 16S rRNA degradation (leading to ribosome degradation) during starvation. This is Ribonuclease PH from Vibrio cholerae serotype O1 (strain ATCC 39315 / El Tor Inaba N16961).